The following is a 152-amino-acid chain: ATP synthase epsilon chain 2 (152 aa).

This sequence belongs to the ATPase epsilon chain family. As to quaternary structure, F-type ATPases have 2 components, CF(1) - the catalytic core - and CF(0) - the membrane proton channel. CF(1) has five subunits: alpha(3), beta(3), gamma(1), delta(1), epsilon(1). CF(0) has three main subunits: a, b and c.

It localises to the cell inner membrane. Its function is as follows. Produces ATP from ADP in the presence of a proton gradient across the membrane. This Burkholderia orbicola (strain AU 1054) protein is ATP synthase epsilon chain 2.